Here is a 354-residue protein sequence, read N- to C-terminus: Fructose-bisphosphate aldolase (354 aa).

D-glyceraldehyde 3-phosphate is bound at residue Ser-61. Asp-104 (proton donor) is an active-site residue. Residues His-105, Asp-139, Glu-169, and His-221 each contribute to the Zn(2+) site. Gly-222 contributes to the dihydroxyacetone phosphate binding site. His-260 is a Zn(2+) binding site. Dihydroxyacetone phosphate is bound by residues 261 to 263 (GGS) and 282 to 285 (NIDT).

The protein belongs to the class II fructose-bisphosphate aldolase family. Homodimer. The cofactor is Zn(2+).

It carries out the reaction beta-D-fructose 1,6-bisphosphate = D-glyceraldehyde 3-phosphate + dihydroxyacetone phosphate. The protein operates within carbohydrate degradation; glycolysis; D-glyceraldehyde 3-phosphate and glycerone phosphate from D-glucose: step 4/4. In terms of biological role, catalyzes the aldol condensation of dihydroxyacetone phosphate (DHAP or glycerone-phosphate) with glyceraldehyde 3-phosphate (G3P) to form fructose 1,6-bisphosphate (FBP) in gluconeogenesis and the reverse reaction in glycolysis. This is Fructose-bisphosphate aldolase (fba) from Campylobacter jejuni subsp. jejuni serotype O:2 (strain ATCC 700819 / NCTC 11168).